The chain runs to 649 residues: Microtubule-associated protein VP6 (649 aa).

It localises to the virion. It is found in the host cytoplasm. The protein localises to the host cytoskeleton. Functionally, minor inner capsid component. Displays NTPase and RNA 5'-triphosphatase (RTPase) activities. May function as a cofactor of polymerase VP2. Associates with microtubules and plays a role in the formation, structural organization and morphology of viral inclusions, where the assembly of cores and the replication of viral RNA occur. The polypeptide is Microtubule-associated protein VP6 (S6) (Cryphonectria parasitica (Chestnut blight fungus)).